A 633-amino-acid polypeptide reads, in one-letter code: Glutamyl-tRNA(Gln) amidotransferase subunit E (633 aa).

This sequence belongs to the GatB/GatE family. GatE subfamily. Heterodimer of GatD and GatE.

It carries out the reaction L-glutamyl-tRNA(Gln) + L-glutamine + ATP + H2O = L-glutaminyl-tRNA(Gln) + L-glutamate + ADP + phosphate + H(+). In terms of biological role, allows the formation of correctly charged Gln-tRNA(Gln) through the transamidation of misacylated Glu-tRNA(Gln) in organisms which lack glutaminyl-tRNA synthetase. The reaction takes place in the presence of glutamine and ATP through an activated gamma-phospho-Glu-tRNA(Gln). The GatDE system is specific for glutamate and does not act on aspartate. The sequence is that of Glutamyl-tRNA(Gln) amidotransferase subunit E from Methanosarcina barkeri (strain Fusaro / DSM 804).